The sequence spans 507 residues: Glycogen synthase (507 aa).

An ADP-alpha-D-glucose-binding site is contributed by Lys15.

This sequence belongs to the glycosyltransferase 1 family. Bacterial/plant glycogen synthase subfamily.

It carries out the reaction [(1-&gt;4)-alpha-D-glucosyl](n) + ADP-alpha-D-glucose = [(1-&gt;4)-alpha-D-glucosyl](n+1) + ADP + H(+). Its pathway is glycan biosynthesis; glycogen biosynthesis. In terms of biological role, synthesizes alpha-1,4-glucan chains using ADP-glucose. The protein is Glycogen synthase of Rhodopirellula baltica (strain DSM 10527 / NCIMB 13988 / SH1).